Reading from the N-terminus, the 214-residue chain is GTP-binding nuclear protein GSP1/Ran (214 aa).

In terms of domain architecture, Small GTPase Ran-type spans 4 to 168 (EVAAFKLVLV…LWLARKLAGN (165 aa)). Position 15–22 (15–22 (DGGTGKTT)) interacts with GTP. Positions 34–42 (NRYNATLGV) are switch-I. GTP-binding positions include G65, 119-122 (NKVD), and 147-149 (SAK). Positions 65–81 (GQEKFGGLRDGYYINGQ) are switch-II.

Belongs to the small GTPase superfamily. Ran family. In terms of assembly, found in a nuclear export complex with RanGTP, exportin and pre-miRNA.

Its subcellular location is the nucleus. Functionally, GTP-binding protein involved in nucleocytoplasmic transport. Required for the import of protein into the nucleus and also for RNA export. Involved in chromatin condensation and control of cell cycle. The protein is GTP-binding nuclear protein GSP1/Ran (GSP1) of Yarrowia lipolytica (strain CLIB 122 / E 150) (Yeast).